A 503-amino-acid polypeptide reads, in one-letter code: 2,3-bisphosphoglycerate-independent phosphoglycerate mutase (503 aa).

Residues aspartate 10 and serine 60 each coordinate Mn(2+). Catalysis depends on serine 60, which acts as the Phosphoserine intermediate. Residues histidine 121, 150-151 (RD), arginine 181, arginine 187, 256-259 (RPDR), and lysine 330 contribute to the substrate site. Aspartate 396, histidine 400, aspartate 437, histidine 438, and histidine 455 together coordinate Mn(2+).

It belongs to the BPG-independent phosphoglycerate mutase family. In terms of assembly, monomer. The cofactor is Mn(2+).

The enzyme catalyses (2R)-2-phosphoglycerate = (2R)-3-phosphoglycerate. Its pathway is carbohydrate degradation; glycolysis; pyruvate from D-glyceraldehyde 3-phosphate: step 3/5. Catalyzes the interconversion of 2-phosphoglycerate and 3-phosphoglycerate. This chain is 2,3-bisphosphoglycerate-independent phosphoglycerate mutase, found in Mycoplasmoides gallisepticum (strain R(low / passage 15 / clone 2)) (Mycoplasma gallisepticum).